The following is a 727-amino-acid chain: Pollen-specific leucine-rich repeat extensin-like protein 3 (727 aa).

The first 22 residues, 1 to 22, serve as a signal peptide directing secretion; sequence MPHIYKQPLGIFQGFVPTLTDA. An LRR 1 repeat occupies 19 to 43; that stretch reads LTDAEVSFIAQRQLLTLPENGELPD. Asn-80 is a glycosylation site (N-linked (GlcNAc...) asparagine). 9 LRR repeats span residues 107-131, 132-154, 156-179, 180-202, 203-226, 228-249, 250-273, 275-296, and 297-321; these read VAVV…LGLM, TDVA…SFEK, SLMH…VLSW, PAVK…ELFK, KDLD…LGES, ASVV…IGNM, KNLN…IGKL, NVNV…SFVG, and LTSM…ICKL. Residue Asn-326 is glycosylated (N-linked (GlcNAc...) asparagine). Residues 381–727 are disordered; sequence SKDKCAGGSS…SPPPPMFQGY (347 aa). Composition is skewed to pro residues over residues 397–419, 446–457, 466–479, 492–677, and 718–727; these read SPSP…PQPN, SPPPASSPPTSP, VHKP…PQPN, SPPP…PKMS, and SPPPPMFQGY. Residues 432 to 727 form a contains the Ser-Pro(4) repeats region; it reads SPPPPQQPHH…SPPPPMFQGY (296 aa).

Post-translationally, hydroxylated on proline residues in the S-P-P-P-P repeat. O-glycosylated on hydroxyprolines. As to expression, expressed in flowers, stamen, pollen, and pollinated carpels.

It is found in the secreted. It localises to the cell wall. Its function is as follows. Modulates cell morphogenesis by regulating cell wall formation and assembly, and/or growth polarization. This Arabidopsis thaliana (Mouse-ear cress) protein is Pollen-specific leucine-rich repeat extensin-like protein 3 (PEX3).